The following is a 552-amino-acid chain: uncharacterized protein (552 aa).

Position 29-36 (glycine 29–serine 36) interacts with ATP. One can recognise a Toprim domain in the interval arginine 379–proline 469.

This is an uncharacterized protein from Escherichia coli (strain K12).